A 238-amino-acid polypeptide reads, in one-letter code: Photosynthetic NDH subunit of lumenal location 1, chloroplastic (238 aa).

The protein belongs to the PsbP family. In terms of assembly, part of the chloroplast NDH complex, composed of a mixture of chloroplast and nucleus encoded subunits. Component of the NDH lumenal subcomplex, at least composed of PnsL1, PnsL2, PnsL3, PnsL4 and PnsL5.

The protein localises to the plastid. The protein resides in the chloroplast thylakoid membrane. In terms of biological role, NDH shuttles electrons from NAD(P)H:plastoquinone, via FMN and iron-sulfur (Fe-S) centers, to quinones in the photosynthetic chain and possibly in a chloroplast respiratory chain. The immediate electron acceptor for the enzyme in this species is believed to be plastoquinone. Couples the redox reaction to proton translocation, and thus conserves the redox energy in a proton gradient. Required for accumulation of the chloroplast NAD(P)H dehydrogenase (NDH) complex. In Arabidopsis thaliana (Mouse-ear cress), this protein is Photosynthetic NDH subunit of lumenal location 1, chloroplastic.